The chain runs to 858 residues: Heat shock protein 105 kDa (858 aa).

Position 2 is an N-acetylserine (Ser2). The residue at position 471 (Lys471) is an N6-acetyllysine. Disordered stretches follow at residues 500 to 585 and 801 to 858; these read KVPT…PPEA and VTQP…MDLD. Positions 504–515 are enriched in acidic residues; it reads EEEDGSSVEADM. Ser509 and Ser510 each carry phosphoserine. Polar residues predominate over residues 533 to 555; it reads QQDNSEAGTQPQVQTDGQQTSQS. A Phosphoserine modification is found at Ser558. A Phosphothreonine modification is found at Thr562. Basic and acidic residues-rich tracts occupy residues 564–585 and 806–815; these read EENK…PPEA and PKIESPKLER. Ser810 carries the post-translational modification Phosphoserine. Thr816 is subject to Phosphothreonine.

This sequence belongs to the heat shock protein 70 family. In terms of assembly, interacts with HSPA8/HSC70. Interacts with HSPA1A (via NBD) and HSPA1B (via NBD). Phosphorylation on Ser-509 may be important for regulation of the HSPA8/HSC70 chaperone activity.

The protein resides in the cytoplasm. Acts as a nucleotide-exchange factor (NEF) for chaperone proteins HSPA1A and HSPA1B, promoting the release of ADP from HSPA1A/B thereby triggering substrate release. Prevents the aggregation of denatured proteins in cells under severe stress, on which the ATP levels decrease markedly. Inhibits HSPA8/HSC70 ATPase and chaperone activities. The sequence is that of Heat shock protein 105 kDa (Hsph1) from Rattus norvegicus (Rat).